A 132-amino-acid chain; its full sequence is UPF0102 protein LI0223 (132 aa).

Belongs to the UPF0102 family.

The polypeptide is UPF0102 protein LI0223 (Lawsonia intracellularis (strain PHE/MN1-00)).